Here is a 465-residue protein sequence, read N- to C-terminus: ATP synthase subunit beta (465 aa).

ATP is bound at residue 152 to 159; the sequence is GGAGVGKT.

This sequence belongs to the ATPase alpha/beta chains family. As to quaternary structure, F-type ATPases have 2 components, CF(1) - the catalytic core - and CF(0) - the membrane proton channel. CF(1) has five subunits: alpha(3), beta(3), gamma(1), delta(1), epsilon(1). CF(0) has three main subunits: a(1), b(2) and c(9-12). The alpha and beta chains form an alternating ring which encloses part of the gamma chain. CF(1) is attached to CF(0) by a central stalk formed by the gamma and epsilon chains, while a peripheral stalk is formed by the delta and b chains.

Its subcellular location is the cell inner membrane. It carries out the reaction ATP + H2O + 4 H(+)(in) = ADP + phosphate + 5 H(+)(out). Produces ATP from ADP in the presence of a proton gradient across the membrane. The catalytic sites are hosted primarily by the beta subunits. In Campylobacter fetus subsp. fetus (strain 82-40), this protein is ATP synthase subunit beta.